Here is a 178-residue protein sequence, read N- to C-terminus: Nascent polypeptide-associated complex subunit alpha (178 aa).

Positions 20–84 (SKNEKKAREL…AKVDDMNKRI (65 aa)) constitute an NAC-A/B domain. The segment covering 87-104 (AQAQQEQQEALTKAAADA) has biased composition (low complexity). The tract at residues 87 to 142 (AQAQQEQQEALTKAAADAETADKSPESITNDLQNASLEDKTVEEDEGEVDETGLDS) is disordered. Positions 112 to 122 (ESITNDLQNAS) are enriched in polar residues. Positions 127–139 (TVEEDEGEVDETG) are enriched in acidic residues. One can recognise a UBA domain in the interval 140 to 178 (LDSKDIEIIVEQTQVSRAKAVKALRAHKGDMVNAIMELS).

Belongs to the NAC-alpha family. Part of the nascent polypeptide-associated complex (NAC), consisting of EGD2 and EGD1. NAC associates with ribosomes via EGD1.

The protein resides in the cytoplasm. It is found in the nucleus. Functionally, component of the nascent polypeptide-associated complex (NAC), a dynamic component of the ribosomal exit tunnel, protecting the emerging polypeptides from interaction with other cytoplasmic proteins to ensure appropriate nascent protein targeting. The NAC complex also promotes mitochondrial protein import by enhancing productive ribosome interactions with the outer mitochondrial membrane and blocks the inappropriate interaction of ribosomes translating non-secretory nascent polypeptides with translocation sites in the membrane of the endoplasmic reticulum. EGD2 may also be involved in transcription regulation. The polypeptide is Nascent polypeptide-associated complex subunit alpha (EGD2) (Meyerozyma guilliermondii (strain ATCC 6260 / CBS 566 / DSM 6381 / JCM 1539 / NBRC 10279 / NRRL Y-324) (Yeast)).